Reading from the N-terminus, the 593-residue chain is Lipolysis-stimulated lipoprotein receptor (593 aa).

A signal peptide spans 1–35; the sequence is MAPAAGACAGAPDSHPATVVFVCLFLIIFCPDPAS. The Extracellular segment spans residues 36 to 206; sequence AIQVTVSDPY…PGFRAGPLED (171 aa). The 93-residue stretch at 89–181 folds into the Ig-like V-type domain; sequence PASVDNQLNA…DLDGNNEAYA (93 aa). An intrachain disulfide couples cysteine 113 to cysteine 165. A helical membrane pass occupies residues 207–227; that stretch reads WLFVVVVCLASLLLFLLLGIC. Over 228-593 the chain is Cytoplasmic; sequence WCQCCPHTCC…LALSRESLVV (366 aa). The residue at position 283 (threonine 283) is a Phosphothreonine. 5 positions are modified to phosphoserine: serine 308, serine 314, serine 332, serine 375, and serine 379. The span at 375 to 387 shows a compositional bias: basic and acidic residues; the sequence is SEVTSLHEDDWRS. The tract at residues 375–578 is disordered; it reads SEVTSLHEDD…ETDSQASRER (204 aa). Threonine 396 bears the Phosphothreonine mark. Residues serine 407, serine 410, and serine 436 each carry the phosphoserine modification. The span at 435-444 shows a compositional bias: basic and acidic residues; it reads RSVDALDDIN. Over residues 445–460 the composition is skewed to low complexity; that stretch reads RPGSTESGRSSPPSSG. Phosphoserine occurs at positions 471 and 473. Positions 472 to 550 are enriched in basic and acidic residues; sequence RSRDDLYDPD…GSGERRRVYR (79 aa). Position 478 is a phosphotyrosine (tyrosine 478). Serine 575 is subject to Phosphoserine. Lysine 582 is covalently cross-linked (Glycyl lysine isopeptide (Lys-Gly) (interchain with G-Cter in ubiquitin)). A phosphoserine mark is found at serine 587 and serine 590.

This sequence belongs to the immunoglobulin superfamily. LISCH7 family. As to quaternary structure, homotrimer or homotetramer constituted of isoform 1 and/or isoform 2 and isoform 3. Assembles into cell-cell contacts. Interacts (via the cytoplasmic domain) with MARVELD2 (via C-terminal cytoplasmic domain); the interaction is required to recruit MARVELD2 to tricellular contacts. Interacts with OCLN. Post-translationally, phosphorylation at Ser-308 by MAPK8/JNK1 and MAPK9/JNK2 may be required for exclusive localization at tricellular tight junstions. Polyubiquitinated at Lys-582 via 'Lys-63'-linked ubiquitin chains; deubiquitinated by USP53. In terms of tissue distribution, specifically expressed in liver. Also detected in kidney and lung.

It is found in the cell membrane. The protein localises to the cell junction. It localises to the tight junction. Its function is as follows. Probable role in the clearance of triglyceride-rich lipoprotein from blood. Binds chylomicrons, LDL and VLDL in presence of free fatty acids and allows their subsequent uptake in the cells. Maintains epithelial barrier function by recruiting MARVELD2/tricellulin to tricellular tight junctions. In Rattus norvegicus (Rat), this protein is Lipolysis-stimulated lipoprotein receptor.